Consider the following 729-residue polypeptide: Phosphoribosylformylglycinamidine synthase subunit PurL (729 aa).

His54 is an active-site residue. ATP is bound by residues Tyr57 and Lys96. A Mg(2+)-binding site is contributed by Glu98. Substrate-binding positions include 99–102 (SHNH) and Arg121. The active-site Proton acceptor is the His100. Mg(2+) is bound at residue Asp122. Gln245 serves as a coordination point for substrate. Asp273 contacts Mg(2+). 317 to 319 (ETQ) contacts substrate. ATP-binding residues include Asp495 and Gly532. Asn533 serves as a coordination point for Mg(2+). Position 535 (Ser535) interacts with substrate.

This sequence belongs to the FGAMS family. In terms of assembly, monomer. Part of the FGAM synthase complex composed of 1 PurL, 1 PurQ and 2 PurS subunits.

Its subcellular location is the cytoplasm. It carries out the reaction N(2)-formyl-N(1)-(5-phospho-beta-D-ribosyl)glycinamide + L-glutamine + ATP + H2O = 2-formamido-N(1)-(5-O-phospho-beta-D-ribosyl)acetamidine + L-glutamate + ADP + phosphate + H(+). It participates in purine metabolism; IMP biosynthesis via de novo pathway; 5-amino-1-(5-phospho-D-ribosyl)imidazole from N(2)-formyl-N(1)-(5-phospho-D-ribosyl)glycinamide: step 1/2. Part of the phosphoribosylformylglycinamidine synthase complex involved in the purines biosynthetic pathway. Catalyzes the ATP-dependent conversion of formylglycinamide ribonucleotide (FGAR) and glutamine to yield formylglycinamidine ribonucleotide (FGAM) and glutamate. The FGAM synthase complex is composed of three subunits. PurQ produces an ammonia molecule by converting glutamine to glutamate. PurL transfers the ammonia molecule to FGAR to form FGAM in an ATP-dependent manner. PurS interacts with PurQ and PurL and is thought to assist in the transfer of the ammonia molecule from PurQ to PurL. The protein is Phosphoribosylformylglycinamidine synthase subunit PurL of Staphylococcus haemolyticus (strain JCSC1435).